A 208-amino-acid polypeptide reads, in one-letter code: Cytochrome c oxidase assembly protein CtaG (208 aa).

Residues 1 to 19 are Cytoplasmic-facing; sequence MSPPLPQAPQQPAPRRGLG. The helical; Signal-anchor for type II membrane protein transmembrane segment at 20-42 threads the bilayer; that stretch reads HDTAVAAVCGLVVALMVGASFAA. At 43-208 the chain is on the periplasmic side; the sequence is VPFYNWFCRT…SEPAPRKGNL (166 aa).

It belongs to the COX11/CtaG family.

It is found in the cell inner membrane. In terms of biological role, exerts its effect at some terminal stage of cytochrome c oxidase synthesis, probably by being involved in the insertion of the copper B into subunit I. This is Cytochrome c oxidase assembly protein CtaG from Rhodopseudomonas palustris (strain TIE-1).